A 436-amino-acid polypeptide reads, in one-letter code: Trigger factor (436 aa).

One can recognise a PPIase FKBP-type domain in the interval Gly-161–Pro-246.

It belongs to the FKBP-type PPIase family. Tig subfamily.

The protein resides in the cytoplasm. It catalyses the reaction [protein]-peptidylproline (omega=180) = [protein]-peptidylproline (omega=0). Its function is as follows. Involved in protein export. Acts as a chaperone by maintaining the newly synthesized protein in an open conformation. Functions as a peptidyl-prolyl cis-trans isomerase. The sequence is that of Trigger factor from Aeromonas salmonicida (strain A449).